The chain runs to 153 residues: Nitrogen regulatory protein (153 aa).

The 144-residue stretch at aspartate 5 to proline 148 folds into the PTS EIIA type-2 domain. The active-site Tele-phosphohistidine intermediate is histidine 66.

The protein resides in the cytoplasm. Its function is as follows. Seems to have a role in regulating nitrogen assimilation. This chain is Nitrogen regulatory protein (ptsN), found in Bradyrhizobium diazoefficiens (strain JCM 10833 / BCRC 13528 / IAM 13628 / NBRC 14792 / USDA 110).